Consider the following 1913-residue polypeptide: GREB1-like protein (1913 aa).

Positions 86 to 96 are enriched in acidic residues; the sequence is MEDDEDEEEMS. Disordered stretches follow at residues 86–111, 281–309, 1097–1157, and 1179–1207; these read MEDD…KPAP, NGTS…SPRP, EAER…TSSI, and DSLD…LAWS. Residues 289–301 show a composition bias toward low complexity; the sequence is KSSSCSSTPSRPG. The segment covering 1118 to 1157 has biased composition (polar residues); that stretch reads PQSNSSAVTGTSGSIMENGVSSSSTAGKPQQQLLTPTSSI. Low complexity predominate over residues 1187 to 1200; that stretch reads SSTTSKPSSSSSSS. A helical membrane pass occupies residues 1832 to 1852; it reads GVFFSGLLLYLCDSFVGADLL.

Belongs to the GREB1 family. Expressed in the inner ear, with a high presence in the spiral ganglia, cochlear nerve bundles, and hair cells.

It localises to the membrane. In terms of biological role, plays a major role in early metanephros and genital development. This Mus musculus (Mouse) protein is GREB1-like protein (Greb1l).